A 166-amino-acid chain; its full sequence is MRLILLSSLLLLGIFLADGDEVDPDGKVLNSLIYGVMHLQREFANLKGAFLTVHRARSFGSGSERLYVTNKEIKNFEALRQICEQAEGHIPSPQLENQNKAFANVLERHGKEAYLVVGDSANFTNWAAGEPNKAAGTCVKADTHGSWHSASCDDNLLVVCEFYFIL.

The N-terminal stretch at 1–19 (MRLILLSSLLLLGIFLADG) is a signal peptide. Residues 46–161 (LKGAFLTVHR…CDDNLLVVCE (116 aa)) enclose the C-type lectin domain. Disulfide bonds link cysteine 83-cysteine 160 and cysteine 138-cysteine 152. The N-linked (GlcNAc...) asparagine glycan is linked to asparagine 122.

It belongs to the alpha-type phospholipase A2 inhibitor family. In terms of assembly, homotrimer; non-covalently linked. Expressed by the liver.

Its subcellular location is the secreted. Functionally, this phospholipase A2 inhibitor binds directly phospholipase A2 in the presence or absence of calcium. The chain is Phospholipase A2 inhibitor clone 05 from Bothrops moojeni (Lance-headed viper).